Reading from the N-terminus, the 1013-residue chain is Poly [ADP-ribose] polymerase 1 (1013 aa).

2 consecutive PARP-type zinc fingers follow at residues 10–92 (YKAE…ESGG) and 113–203 (FAVE…PAVK). Residues Cys22, Cys25, His54, Cys57, Cys125, Cys128, His159, and Cys162 each coordinate Zn(2+). The segment at 202 to 228 (VKSEGKRKADEVDGGVSKKQKKEDEKL) is disordered. A Nuclear localization signal motif is present at residues 207 to 209 (KRK). Residues 219 to 353 (KKQKKEDEKL…FKRQDRVFPK (135 aa)) form the PADR1 zinc-binding domain. Residues 284-326 (GSLKPCETCKGQLVFKSDAYYCTGDISAWTKCVFKTQTPDRKD) are zinc ribbon. Zn(2+) contacts are provided by Cys289, Cys292, Cys305, and Cys315. The interval 353–385 (KDAPPAAATPSSGSTTSAATSVSSASKNLTEAP) is disordered. The span at 356–378 (PPAAATPSSGSTTSAATSVSSAS) shows a compositional bias: low complexity. An automodification domain region spans residues 365–523 (GSTTSAATSV…EGGSKSKKMK (159 aa)). In terms of domain architecture, BRCT spans 385–461 (PADKPLTGMK…RVVADDFLTD (77 aa)). PolyADP-ribosyl glutamic acid occurs at positions 413, 435, 444, 445, 464, 471, 484, and 488. Over residues 494 to 507 (AATKSTGAHSSKST) the composition is skewed to low complexity. Residues 494-522 (AATKSTGAHSSKSTGKVKEEEGGSKSKKM) form a disordered region. Residues Glu512 and Glu513 each carry the polyADP-ribosyl glutamic acid modification. Residues 541–637 (CAHVLEQNGK…SNFTKYPNKF (97 aa)) form the WGR domain. The PARP alpha-helical domain maps to 661 to 778 (KSQLEKPVQD…DIEVAYSLLR (118 aa)). The 227-residue stretch at 787-1013 (DPIDINYEKL…IRFNYQTSLW (227 aa)) folds into the PARP catalytic domain. NAD(+)-binding positions include 861–863 (HGS), Gly870, Arg877, and Ser903. Catalysis depends on Glu987, which acts as the For poly [ADP-ribose] polymerase activity.

The protein belongs to the ARTD/PARP family. As to quaternary structure, homodimer; PARP-type zinc-fingers from separate parp1 molecules form a dimer module that specifically recognizes DNA strand breaks. Poly-ADP-ribosylated on serine, glutamate and aspartate residues by autocatalysis. Auto-ADP-ribosylation on serine takes place following interaction with HPF1. Auto poly-ADP-ribosylation on serine residues promotes its dissociation from chromatin.

The protein resides in the chromosome. Its subcellular location is the nucleus. It is found in the nucleolus. It localises to the cytoplasm. The protein localises to the cytosol. It carries out the reaction NAD(+) + (ADP-D-ribosyl)n-acceptor = nicotinamide + (ADP-D-ribosyl)n+1-acceptor + H(+).. The catalysed reaction is L-seryl-[protein] + NAD(+) = O-(ADP-D-ribosyl)-L-seryl-[protein] + nicotinamide + H(+). The enzyme catalyses L-aspartyl-[protein] + NAD(+) = 4-O-(ADP-D-ribosyl)-L-aspartyl-[protein] + nicotinamide. It catalyses the reaction L-glutamyl-[protein] + NAD(+) = 5-O-(ADP-D-ribosyl)-L-glutamyl-[protein] + nicotinamide. It carries out the reaction L-tyrosyl-[protein] + NAD(+) = O-(ADP-D-ribosyl)-L-tyrosyl-[protein] + nicotinamide + H(+). The catalysed reaction is L-histidyl-[protein] + NAD(+) = N(tele)-(ADP-D-ribosyl)-L-histidyl-[protein] + nicotinamide + H(+). With respect to regulation, ADP-ribosyltransferase activity is regulated via an allosteric activation mechanism. In absence of activation signal, parp1 is autoinhibited by the PARP alpha-helical domain (also named HD region), which prevents effective NAD(+)-binding. Activity is highly stimulated by signals, such as DNA strand breaks. Binding to damaged DNA unfolds the PARP alpha-helical domain, relieving autoinhibition. Poly-ADP-ribosyltransferase activity is tightly regulated and parp1 is removed from damaged chromatin following initial poly-ADP-ribosylation of chromatin to avoid prolonged residence (trapping) that has cytotoxic consequences. A number of factors or post-translational modifications (auto-poly-ADP-ribosylation) promote parp1 removal from chromatin. Poly-ADP-ribosyltransferase that mediates poly-ADP-ribosylation of proteins and plays a key role in DNA repair. Mediates glutamate, aspartate, serine, histidine or tyrosine ADP-ribosylation of proteins: the ADP-D-ribosyl group of NAD(+) is transferred to the acceptor carboxyl group of target residues and further ADP-ribosyl groups are transferred to the 2'-position of the terminal adenosine moiety, building up a polymer with an average chain length of 20-30 units. Serine ADP-ribosylation of proteins constitutes the primary form of ADP-ribosylation of proteins in response to DNA damage. Specificity for the different amino acids is conferred by interacting factors, such as hpf1 and nmnat1. Following interaction with hpf1, catalyzes serine ADP-ribosylation of target proteins; hpf1 confers serine specificity by completing the parp1 active site. Also catalyzes tyrosine ADP-ribosylation of target proteins following interaction with hpf1. Following interaction with nmnat1, catalyzes glutamate and aspartate ADP-ribosylation of target proteins; nmnat1 confers glutamate and aspartate specificity. Parp1 initiates the repair of DNA breaks: recognizes and binds DNA breaks within chromatin and recruits hpf1, licensing serine ADP-ribosylation of target proteins, such as histones (H2BS6ADPr and H3S10ADPr), thereby promoting decompaction of chromatin and the recruitment of repair factors leading to the reparation of DNA strand breaks. In addition to base excision repair (BER) pathway, also involved in double-strand breaks (DSBs) repair. Mediates the poly-ADP-ribosylation of a number of proteins. In addition to proteins, also able to ADP-ribosylate DNA: catalyzes ADP-ribosylation of DNA strand break termini containing terminal phosphates and a 2'-OH group in single- and double-stranded DNA, respectively. Parp1-mediated DNA repair in neurons plays a role in sleep: senses DNA damage in neurons and promotes sleep, facilitating efficient DNA repair. In addition to DNA repair, also involved in other processes, such as transcription regulation, programmed cell death, membrane repair, adipogenesis and innate immunity. Acts as a repressor of transcription: binds to nucleosomes and modulates chromatin structure in a manner similar to histone H1, thereby altering RNA polymerase II. Acts both as a positive and negative regulator of transcription elongation, depending on the context. Poly-ADP-ribose chains generated by parp1 also play a role in poly-ADP-ribose-dependent cell death, a process named parthanatos. Also acts as a negative regulator of the cGAS-STING pathway by mediating poly-ADP-ribosylation and inactivation of cgas. Acts as a negative regulator of adipogenesis by catalyzing poly ADP-ribosylation of histone H2B on 'Glu-35' (H2BE35ADPr). This Danio rerio (Zebrafish) protein is Poly [ADP-ribose] polymerase 1.